Here is a 694-residue protein sequence, read N- to C-terminus: MQNSDSGSDSATSVALRTSTSAQAPVVQPVPASQQVQTVQHVYPAQVQYVEGDTVYTNGAIRTAYSYNAETQIYAPSSGSSYFDSQGGGAQVTTVVSSPTAIPSHSMVGITMDVSGSQIISSSGAYLIHGGLENSRHTPSHTSRTFPATLEMAIENLQKNEGITSHKSSLLNSHLQWLLDNYETAEGVSLPRSSLYNHYLRHCQDHKLDPVNAASFGKLIRSVFMGLRTRRLGTRGNSKYHYYGIRLKPDSPLNRIQEDAQYMAIRQQPIHQKQRYRPAQKIDGMGENPANSSQHASPEQSVAAQSQHHQQFIDTSHVFPDFPAPDLGSLLLPEGITMTDIKNLQLMYRRHCEATIDVVMNLQFQYIEKLWQAFWNSKPSSPDGSNPMSSEDEQEPIIPNEKLMVLCKYEPIMRWMRNCDHILYQALVEILIPDVLRPVPSTLTQAIRNFAKSLEGWLTNAMCDFPQQIVHAKVGVVSAFAQTLRRYTSLNHLAQAARAVLQNTSQINQMLSDLNRVDFANVQEQASWVCQCDEGMVQKLEQDFKLTLQQQSSLDQWANWLDNVVTQVLKPHEGSTSFPKAARQFLLKWSFYSSMVIRDLTLRSAASFGSFHLIRLLYDEYMFYLVEHRVAQATGETPIAVMGEFSDFASMSPVQMDKDDVSELGSDTEGDPHISGQPPVKRERVELNHSMQEM.

The segment at residues 174-249 is a DNA-binding region (RFX-type winged-helix); the sequence is HLQWLLDNYE…YHYYGIRLKP (76 aa). Disordered regions lie at residues 267–310 and 658–694; these read QQPI…QHHQ and KDDV…MQEM. The span at 289–299 shows a compositional bias: polar residues; that stretch reads PANSSQHASPE. The segment covering 300–310 has biased composition (low complexity); sequence QSVAAQSQHHQ.

It belongs to the RFX family. Homodimer. Heterodimer; heterodimerizes with other rfx proteins. Preferentially expressed in ciliated tissues, such as neural tube, gastrocoel roof plate, epidermal multiciliated cells, otic vesicles and kidneys.

The protein resides in the nucleus. Its subcellular location is the cytoplasm. In terms of biological role, transcription factor that acts as a key regulator of ciliogenesis. Specifically regulates expression of genes required for cilium assembly and function. Recognizes and binds the X-box, a regulatory motif with DNA sequence 5'-GTNRCC(0-3N)RGYAAC-3' present on promoters. Required for neural tube closure and neural ciliogenesis. This Xenopus laevis (African clawed frog) protein is DNA-binding protein RFX2 (rfx2).